A 384-amino-acid polypeptide reads, in one-letter code: MSRLQFQLQATDGAARRGQLSFPCGTVQTPAFMPVGTYGAVKGVLPGQLCDLGAEIILGNTFHLFLRPGLEVIADHGGLHGFMRWNGPILTDSGGFQVFSLAHRRKISEQGVTFAAPTDGAQVFLGPEESMKIQKVLNSDIVMIFDECTPYPATEDVARDSMELSLRWAQRSRDAHDALDNDAALFGIIQGGVHPDLRGRSLDGLQAIGFDGYGIGGLAVGESESERNVILEYLHPRVPADRPRYLMGVGRPEDLVESVARGVDMFDCVMPTRHARNGQYFTGFGTVKIRNACYARDVDPIEPGCGCPACVGGYTRAYLRHLDRCNEMLASMLGTLHNLWYYETLMANMRAAITAGTFFAFRRSFYLARGLDLPPLPEVAGCAG.

The active-site Proton acceptor is Asp92. Residues 92–96 (DSGGF), Asp146, Gln190, and Gly217 contribute to the substrate site. The tract at residues 248–254 (GVGRPED) is RNA binding. Asp267 acts as the Nucleophile in catalysis. The tract at residues 272–276 (TRHAR) is RNA binding; important for wobble base 34 recognition. Zn(2+) is bound by residues Cys305, Cys307, Cys310, and His337.

This sequence belongs to the queuine tRNA-ribosyltransferase family. In terms of assembly, homodimer. Within each dimer, one monomer is responsible for RNA recognition and catalysis, while the other monomer binds to the replacement base PreQ1. Zn(2+) is required as a cofactor.

The enzyme catalyses 7-aminomethyl-7-carbaguanine + guanosine(34) in tRNA = 7-aminomethyl-7-carbaguanosine(34) in tRNA + guanine. It functions in the pathway tRNA modification; tRNA-queuosine biosynthesis. Its function is as follows. Catalyzes the base-exchange of a guanine (G) residue with the queuine precursor 7-aminomethyl-7-deazaguanine (PreQ1) at position 34 (anticodon wobble position) in tRNAs with GU(N) anticodons (tRNA-Asp, -Asn, -His and -Tyr). Catalysis occurs through a double-displacement mechanism. The nucleophile active site attacks the C1' of nucleotide 34 to detach the guanine base from the RNA, forming a covalent enzyme-RNA intermediate. The proton acceptor active site deprotonates the incoming PreQ1, allowing a nucleophilic attack on the C1' of the ribose to form the product. After dissociation, two additional enzymatic reactions on the tRNA convert PreQ1 to queuine (Q), resulting in the hypermodified nucleoside queuosine (7-(((4,5-cis-dihydroxy-2-cyclopenten-1-yl)amino)methyl)-7-deazaguanosine). This is Queuine tRNA-ribosyltransferase from Xylella fastidiosa (strain 9a5c).